A 397-amino-acid chain; its full sequence is Elongation factor Tu (397 aa).

One can recognise a tr-type G domain in the interval lysine 10–valine 207. The interval glycine 19–threonine 26 is G1. Glycine 19 to threonine 26 contributes to the GTP binding site. Threonine 26 is a Mg(2+) binding site. Positions glycine 63 to asparagine 67 are G2. The tract at residues aspartate 84–glycine 87 is G3. GTP is bound by residues aspartate 84–histidine 88 and asparagine 139–aspartate 142. A G4 region spans residues asparagine 139–aspartate 142. The G5 stretch occupies residues serine 177–leucine 179.

Belongs to the TRAFAC class translation factor GTPase superfamily. Classic translation factor GTPase family. EF-Tu/EF-1A subfamily. Monomer.

It localises to the cytoplasm. The enzyme catalyses GTP + H2O = GDP + phosphate + H(+). GTP hydrolase that promotes the GTP-dependent binding of aminoacyl-tRNA to the A-site of ribosomes during protein biosynthesis. The polypeptide is Elongation factor Tu (Clavibacter sepedonicus (Clavibacter michiganensis subsp. sepedonicus)).